The sequence spans 345 residues: DNA-directed RNA polymerase subunit alpha (345 aa).

The interval 1-234 is alpha N-terminal domain (alpha-NTD); the sequence is MRKNEMSTSK…DLLTTFLYVR (234 aa). Residues 266-345 form an alpha C-terminal domain (alpha-CTD) region; the sequence is LEERVLENRF…DKKIVLNRRK (80 aa).

This sequence belongs to the RNA polymerase alpha chain family. As to quaternary structure, in plastids the minimal PEP RNA polymerase catalytic core is composed of four subunits: alpha, beta, beta', and beta''. When a (nuclear-encoded) sigma factor is associated with the core the holoenzyme is formed, which can initiate transcription.

Its subcellular location is the plastid. The protein localises to the chloroplast. It carries out the reaction RNA(n) + a ribonucleoside 5'-triphosphate = RNA(n+1) + diphosphate. Functionally, DNA-dependent RNA polymerase catalyzes the transcription of DNA into RNA using the four ribonucleoside triphosphates as substrates. The polypeptide is DNA-directed RNA polymerase subunit alpha (Adiantum capillus-veneris (Maidenhair fern)).